The primary structure comprises 307 residues: Pseudouridine-5'-phosphate glycosidase (307 aa).

E25 acts as the Proton donor in catalysis. Residues K86 and V106 each coordinate substrate. D138 is a Mn(2+) binding site. 140 to 142 (SAD) is a substrate binding site. K159 acts as the Nucleophile in catalysis.

The protein belongs to the pseudouridine-5'-phosphate glycosidase family. In terms of assembly, homotrimer. Mn(2+) is required as a cofactor.

It catalyses the reaction D-ribose 5-phosphate + uracil = psi-UMP + H2O. Catalyzes the reversible cleavage of pseudouridine 5'-phosphate (PsiMP) to ribose 5-phosphate and uracil. Functions biologically in the cleavage direction, as part of a pseudouridine degradation pathway. This is Pseudouridine-5'-phosphate glycosidase from Caldanaerobacter subterraneus subsp. tengcongensis (strain DSM 15242 / JCM 11007 / NBRC 100824 / MB4) (Thermoanaerobacter tengcongensis).